The following is a 166-amino-acid chain: Phosphopantetheine adenylyltransferase (166 aa).

Substrate is bound at residue Ser9. Residues 9–10 (SF) and His17 each bind ATP. Substrate is bound by residues Lys41, Leu74, and Lys88. Residues 89–91 (GLR), Glu99, and 123–129 (YIHLSST) each bind ATP.

This sequence belongs to the bacterial CoaD family. In terms of assembly, homohexamer. The cofactor is Mg(2+).

The protein resides in the cytoplasm. It catalyses the reaction (R)-4'-phosphopantetheine + ATP + H(+) = 3'-dephospho-CoA + diphosphate. It functions in the pathway cofactor biosynthesis; coenzyme A biosynthesis; CoA from (R)-pantothenate: step 4/5. In terms of biological role, reversibly transfers an adenylyl group from ATP to 4'-phosphopantetheine, yielding dephospho-CoA (dPCoA) and pyrophosphate. This is Phosphopantetheine adenylyltransferase from Pseudarthrobacter chlorophenolicus (strain ATCC 700700 / DSM 12829 / CIP 107037 / JCM 12360 / KCTC 9906 / NCIMB 13794 / A6) (Arthrobacter chlorophenolicus).